The sequence spans 271 residues: Phosphonoacetaldehyde hydrolase (271 aa).

The active-site Nucleophile is the Asp12. Mg(2+)-binding residues include Asp12 and Ala14. Lys54 functions as the Schiff-base intermediate with substrate in the catalytic mechanism. Asp188 serves as a coordination point for Mg(2+).

Belongs to the HAD-like hydrolase superfamily. PhnX family. Homodimer. Mg(2+) is required as a cofactor.

The enzyme catalyses phosphonoacetaldehyde + H2O = acetaldehyde + phosphate + H(+). Functionally, involved in phosphonate degradation. This is Phosphonoacetaldehyde hydrolase from Vibrio vulnificus (strain CMCP6).